The following is a 272-amino-acid chain: Nuclear transcription factor Y subunit A-1 (272 aa).

Disordered stretches follow at residues 1–20 and 34–106; these read MQSKPGRENEEEVNNHHAVQ and SFGV…PALS. 2 stretches are compositionally biased toward polar residues: residues 46–61 and 82–92; these read IPSNSSSLDCPNGSES and KDSQAATSSRS. The Subunit association domain (SAD) motif lies at 175-198; that stretch reads YVNAKQYEGILRRRKARAKAELER. Residues 205–230 constitute a DNA-binding region (NFYA/HAP2-type); it reads KPYLHESRHKHAMRRARASGGRFAKK. Residues 206 to 272 are disordered; sequence PYLHESRHKH…NETLNSSGAP (67 aa). Positions 211–221 are enriched in basic residues; the sequence is SRHKHAMRRAR. Over residues 229–247 the composition is skewed to basic and acidic residues; sequence KKSEVEAGEDAGGRDRERG. Polar residues-rich tracts occupy residues 248–257 and 263–272; these read SATNSSGSEQ and NETLNSSGAP.

This sequence belongs to the NFYA/HAP2 subunit family. In terms of assembly, heterotrimeric transcription factor composed of three components, NF-YA, NF-YB and NF-YC. NF-YB and NF-YC must interact and dimerize for NF-YA association and DNA binding. Ubiquitous.

The protein resides in the nucleus. Functionally, stimulates the transcription of various genes by recognizing and binding to a CCAAT motif in promoters. The polypeptide is Nuclear transcription factor Y subunit A-1 (NFYA1) (Arabidopsis thaliana (Mouse-ear cress)).